The chain runs to 362 residues: UDP-N-acetylglucosamine--N-acetylmuramyl-(pentapeptide) pyrophosphoryl-undecaprenol N-acetylglucosamine transferase (362 aa).

Residues 11 to 13 (TGG), Asn-124, Arg-163, Ser-191, Ile-246, and Gln-291 each bind UDP-N-acetyl-alpha-D-glucosamine.

Belongs to the glycosyltransferase 28 family. MurG subfamily.

It localises to the cell inner membrane. The enzyme catalyses di-trans,octa-cis-undecaprenyl diphospho-N-acetyl-alpha-D-muramoyl-L-alanyl-D-glutamyl-meso-2,6-diaminopimeloyl-D-alanyl-D-alanine + UDP-N-acetyl-alpha-D-glucosamine = di-trans,octa-cis-undecaprenyl diphospho-[N-acetyl-alpha-D-glucosaminyl-(1-&gt;4)]-N-acetyl-alpha-D-muramoyl-L-alanyl-D-glutamyl-meso-2,6-diaminopimeloyl-D-alanyl-D-alanine + UDP + H(+). Its pathway is cell wall biogenesis; peptidoglycan biosynthesis. Its function is as follows. Cell wall formation. Catalyzes the transfer of a GlcNAc subunit on undecaprenyl-pyrophosphoryl-MurNAc-pentapeptide (lipid intermediate I) to form undecaprenyl-pyrophosphoryl-MurNAc-(pentapeptide)GlcNAc (lipid intermediate II). This Idiomarina loihiensis (strain ATCC BAA-735 / DSM 15497 / L2-TR) protein is UDP-N-acetylglucosamine--N-acetylmuramyl-(pentapeptide) pyrophosphoryl-undecaprenol N-acetylglucosamine transferase.